The chain runs to 183 residues: Peptidyl-tRNA hydrolase (183 aa).

Y15 contributes to the tRNA binding site. The active-site Proton acceptor is the H20. TRNA contacts are provided by Y67 and N69.

This sequence belongs to the PTH family. In terms of assembly, monomer.

It localises to the cytoplasm. It catalyses the reaction an N-acyl-L-alpha-aminoacyl-tRNA + H2O = an N-acyl-L-amino acid + a tRNA + H(+). In terms of biological role, hydrolyzes ribosome-free peptidyl-tRNAs (with 1 or more amino acids incorporated), which drop off the ribosome during protein synthesis, or as a result of ribosome stalling. Functionally, catalyzes the release of premature peptidyl moieties from peptidyl-tRNA molecules trapped in stalled 50S ribosomal subunits, and thus maintains levels of free tRNAs and 50S ribosomes. This chain is Peptidyl-tRNA hydrolase, found in Chlamydia caviae (strain ATCC VR-813 / DSM 19441 / 03DC25 / GPIC) (Chlamydophila caviae).